Reading from the N-terminus, the 227-residue chain is MKPSERICAALDFPTFAAAEPFARAVAPEVGLLKVGLELFAAEGPAAVRGAARLGRPVFLDLKLHDIPNTVEGAARSAAASGAALLTVHAAGGAEMVRAAVRGAGPGVRVLAVTVLTSLDAAALDAVGLAGPPEAAVVRLARLAVVAGAGGIVCSPHEVAAVRAAVGPGPLLVVPGVRPAGAAKGDQARVATPAEAVRAGADVIVVGRPLRDAPDPAAAARAIAAGL.

Substrate-binding positions include Asp-12, Lys-34, 61–70 (DLKLHDIPNT), Thr-117, Arg-178, Gln-187, Gly-207, and Arg-208. The active-site Proton donor is Lys-63.

This sequence belongs to the OMP decarboxylase family. Type 1 subfamily. Homodimer.

The catalysed reaction is orotidine 5'-phosphate + H(+) = UMP + CO2. It functions in the pathway pyrimidine metabolism; UMP biosynthesis via de novo pathway; UMP from orotate: step 2/2. In terms of biological role, catalyzes the decarboxylation of orotidine 5'-monophosphate (OMP) to uridine 5'-monophosphate (UMP). This is Orotidine 5'-phosphate decarboxylase from Anaeromyxobacter dehalogenans (strain 2CP-1 / ATCC BAA-258).